The primary structure comprises 199 residues: CASP-like protein 4C1 (199 aa).

The Cytoplasmic portion of the chain corresponds to 1–35 (MESGSVANDSGPLNSTPDVHLYGKTAAMKQRRSNT). Residues 36–56 (MLFVFRLLTFSFSLAAVLVMG) form a helical membrane-spanning segment. Residues 57–80 (TNKQKIRSAPQYLEVAWHDFDPFR) lie on the Extracellular side of the membrane. Residues 81 to 101 (YVFAVNAIICVYSFVETWLAV) traverse the membrane as a helical segment. At 102 to 124 (YTLSRGTLLLPETFQVWFDYGHD) the chain is on the cytoplasmic side. A helical transmembrane segment spans residues 125-145 (QGFACLLFSANSVGIAMAQLL). Topologically, residues 146–169 (QSGSTLIQGQYYCSDAGAYCTQAR) are extracellular. The chain crosses the membrane as a helical span at residues 170-190 (VSIAMGFGAFLFLALSSFLTG). Residues 191-199 (LRVARWYLP) are Cytoplasmic-facing.

This sequence belongs to the Casparian strip membrane proteins (CASP) family. Homodimer and heterodimers.

The protein localises to the cell membrane. The protein is CASP-like protein 4C1 of Physcomitrium patens (Spreading-leaved earth moss).